A 282-amino-acid chain; its full sequence is NADPH-dependent 7-cyano-7-deazaguanine reductase (282 aa).

A substrate-binding site is contributed by 88–90; it reads IES. 90-91 provides a ligand contact to NADPH; sequence SK. Catalysis depends on Cys-190, which acts as the Thioimide intermediate. Asp-197 serves as the catalytic Proton donor. 229 to 230 contacts substrate; it reads HE. 258-259 contributes to the NADPH binding site; that stretch reads RG.

It belongs to the GTP cyclohydrolase I family. QueF type 2 subfamily. In terms of assembly, homodimer.

It localises to the cytoplasm. It carries out the reaction 7-aminomethyl-7-carbaguanine + 2 NADP(+) = 7-cyano-7-deazaguanine + 2 NADPH + 3 H(+). The protein operates within tRNA modification; tRNA-queuosine biosynthesis. Its function is as follows. Catalyzes the NADPH-dependent reduction of 7-cyano-7-deazaguanine (preQ0) to 7-aminomethyl-7-deazaguanine (preQ1). The sequence is that of NADPH-dependent 7-cyano-7-deazaguanine reductase from Salmonella paratyphi C (strain RKS4594).